A 389-amino-acid polypeptide reads, in one-letter code: Apicidin F cluster transcription factor apf2 (389 aa).

Composition is skewed to polar residues over residues 1–13 and 75–84; these read MSPP…TITD and PDSATPKPSL. Disordered regions lie at residues 1–27, 65–84, and 219–239; these read MSPP…VAQR, PQSV…KPSL, and EVPN…TKQP. The interval 12–38 is basic DNA-binding region; that stretch reads TDANERRKAQNRVAQRNYRSRQKLRVE. 4 ANK repeats span residues 241-270, 274-303, 307-336, and 357-386; these read EFKT…NIDT, HGRT…DLLM, SGVT…QQDR, and QNMT…DVNI.

The protein belongs to the bZIP family. Highly divergent.

It is found in the nucleus. Its function is as follows. Transcription factor that regulates the expression of the gene cluster that mediates the biosynthesis of apicidin F. Binds to the eight-base-pair motif 5'-TGACGTGA-3' called the 'Api-box' that is found in all promoters of the apicidin F cluster except in the promoter region of apf2 itself. The polypeptide is Apicidin F cluster transcription factor apf2 (Gibberella fujikuroi (strain CBS 195.34 / IMI 58289 / NRRL A-6831) (Bakanae and foot rot disease fungus)).